Consider the following 479-residue polypeptide: Pup--protein ligase (479 aa).

Position 17 (Glu-17) interacts with Mg(2+). Arg-62 serves as a coordination point for ATP. Tyr-64 is a Mg(2+) binding site. The Proton acceptor role is filled by Asp-66. Glu-72 is a binding site for Mg(2+). Residues Ser-75 and Trp-432 each coordinate ATP.

Belongs to the Pup ligase/Pup deamidase family. Pup-conjugating enzyme subfamily.

It catalyses the reaction ATP + [prokaryotic ubiquitin-like protein]-L-glutamate + [protein]-L-lysine = ADP + phosphate + N(6)-([prokaryotic ubiquitin-like protein]-gamma-L-glutamyl)-[protein]-L-lysine.. It participates in protein degradation; proteasomal Pup-dependent pathway. It functions in the pathway protein modification; protein pupylation. Catalyzes the covalent attachment of the prokaryotic ubiquitin-like protein modifier Pup to the proteasomal substrate proteins, thereby targeting them for proteasomal degradation. This tagging system is termed pupylation. The ligation reaction involves the side-chain carboxylate of the C-terminal glutamate of Pup and the side-chain amino group of a substrate lysine. The sequence is that of Pup--protein ligase from Corynebacterium diphtheriae (strain ATCC 700971 / NCTC 13129 / Biotype gravis).